The primary structure comprises 542 residues: CTP synthase (542 aa).

An amidoligase domain region spans residues 1–265; the sequence is MARYVFITGG…DSEVLSAFGI (265 aa). Ser13 provides a ligand contact to CTP. Residue Ser13 coordinates UTP. 14-19 serves as a coordination point for ATP; it reads SLGKGI. Position 54 (Tyr54) interacts with L-glutamine. Asp71 lines the ATP pocket. Mg(2+) is bound by residues Asp71 and Glu139. CTP-binding positions include 146–148, 186–191, and Lys222; these read DIE and KTKPTQ. Residues 186-191 and Lys222 each bind UTP; that span reads KTKPTQ. A Glutamine amidotransferase type-1 domain is found at 291 to 541; that stretch reads TIAVVGKYTG…IEAAIEQSRL (251 aa). Gly353 serves as a coordination point for L-glutamine. The active-site Nucleophile; for glutamine hydrolysis is the Cys380. Residues 381–384, Glu404, and Arg469 each bind L-glutamine; that span reads FGMQ. Catalysis depends on residues His514 and Glu516.

The protein belongs to the CTP synthase family. Homotetramer.

The enzyme catalyses UTP + L-glutamine + ATP + H2O = CTP + L-glutamate + ADP + phosphate + 2 H(+). It carries out the reaction L-glutamine + H2O = L-glutamate + NH4(+). It catalyses the reaction UTP + NH4(+) + ATP = CTP + ADP + phosphate + 2 H(+). It participates in pyrimidine metabolism; CTP biosynthesis via de novo pathway; CTP from UDP: step 2/2. With respect to regulation, allosterically activated by GTP, when glutamine is the substrate; GTP has no effect on the reaction when ammonia is the substrate. The allosteric effector GTP functions by stabilizing the protein conformation that binds the tetrahedral intermediate(s) formed during glutamine hydrolysis. Inhibited by the product CTP, via allosteric rather than competitive inhibition. Functionally, catalyzes the ATP-dependent amination of UTP to CTP with either L-glutamine or ammonia as the source of nitrogen. Regulates intracellular CTP levels through interactions with the four ribonucleotide triphosphates. The sequence is that of CTP synthase from Brucella abortus (strain 2308).